Reading from the N-terminus, the 456-residue chain is IQ domain-containing protein IQM3 (456 aa).

The 30-residue stretch at 46-75 (TRLAAVKVQKVYRSYRTRRRLADSVVVAEE) folds into the IQ domain. The disordered stretch occupies residues 315–358 (SEDSDSYDDYVKSNGGSEPEPLKKEDTTFQAETETDENGNGTVG).

As to expression, expressed in roots, rosette and cauline leaves, flowers and siliques, and at lower levels in stems.

The protein resides in the cytoplasm. The protein localises to the nucleus. In terms of biological role, may be involved in biotic and abiotic stress responses. The chain is IQ domain-containing protein IQM3 from Arabidopsis thaliana (Mouse-ear cress).